A 311-amino-acid polypeptide reads, in one-letter code: Heme A synthase (311 aa).

At 1-6 (MQRFIK) the chain is on the cytoplasmic side. Residues 7 to 27 (WLAVITSLDLLIVLLGGALVT) traverse the membrane as a helical segment. Residues 28–62 (KTGSGQGCGKSWPLCNGEFVPSNLSMETIIELSHR) are Extracellular-facing. Residues cysteine 35 and cysteine 42 are joined by a disulfide bond. The active site involves glutamate 58. Residue histidine 61 participates in heme o binding. A helical transmembrane segment spans residues 63–83 (LTSGSAGILVTLLCILSWKYY). Residues 84–91 (KHVRETKT) lie on the Cytoplasmic side of the membrane. A helical transmembrane segment spans residues 92–112 (LAILSFVFLVAQALMGAAAVV). Residues 113–121 (WGQMPAVLA) are Extracellular-facing. The chain crosses the membrane as a helical span at residues 122–142 (IHFGISLISFASVILLTCLIF). Histidine 123 contacts heme o. At 143-159 (EIDQKFDARSLIMDKKM) the chain is on the cytoplasmic side. A helical transmembrane segment spans residues 160–180 (KFHIYGVTIYSYIVVYTGALV). Over 181 to 211 (RHERASLACPDFPLCSKNRPMPTQLHEWVQM) the chain is Extracellular. A disulfide bond links cysteine 189 and cysteine 195. A helical transmembrane segment spans residues 212 to 232 (GHRVAAMLIFAWILYAMILAI). Residue histidine 213 coordinates heme b. Residues 233-243 (RHYKQQPVVYW) are Cytoplasmic-facing. A helical membrane pass occupies residues 244 to 264 (GWIISFILVTLQAVVGVLVVF). Residues 265-271 (TNASLAM) are Extracellular-facing. Residues 272 to 292 (ALLHSLFISCLFAVLCYLVML) form a helical membrane-spanning segment. Histidine 275 contributes to the heme b binding site. At 293-311 (GTRSKVNAKEAELTSKQTK) the chain is on the cytoplasmic side.

It belongs to the COX15/CtaA family. Type 1 subfamily. As to quaternary structure, interacts with CtaB. Heme b is required as a cofactor.

It localises to the cell membrane. It catalyses the reaction Fe(II)-heme o + 2 A + H2O = Fe(II)-heme a + 2 AH2. It functions in the pathway porphyrin-containing compound metabolism; heme A biosynthesis; heme A from heme O: step 1/1. In terms of biological role, catalyzes the conversion of heme O to heme A by two successive hydroxylations of the methyl group at C8. The first hydroxylation forms heme I, the second hydroxylation results in an unstable dihydroxymethyl group, which spontaneously dehydrates, resulting in the formyl group of heme A. In Bacillus cereus (strain ATCC 14579 / DSM 31 / CCUG 7414 / JCM 2152 / NBRC 15305 / NCIMB 9373 / NCTC 2599 / NRRL B-3711), this protein is Heme A synthase.